A 263-amino-acid chain; its full sequence is Proteasome subunit beta type-5 (263 aa).

A propeptide spans 1-59 (MALASVLERPLSVNRRGFFGLGGRADLLDLGPGSPSDGLSLAAPSWGVPEEPRIEILHG) (removed in mature form). The Nucleophile role is filled by Thr-60. Residue Ala-108 coordinates bortezomib.

Belongs to the peptidase T1B family. The 26S proteasome consists of a 20S proteasome core and two 19S regulatory subunits. The 20S proteasome core is a barrel-shaped complex made of 28 subunits that are arranged in four stacked rings. The two outer rings are each formed by seven alpha subunits, and the two inner rings are formed by seven beta subunits. The proteolytic activity is exerted by three beta-subunits PSMB5, PSMB6 and PSMB7. Directly interacts with POMP. Interacts with ABCB1 and TAP1.

The protein localises to the cytoplasm. It is found in the nucleus. The enzyme catalyses Cleavage of peptide bonds with very broad specificity.. Its function is as follows. Component of the 20S core proteasome complex involved in the proteolytic degradation of most intracellular proteins. This complex plays numerous essential roles within the cell by associating with different regulatory particles. Associated with two 19S regulatory particles, forms the 26S proteasome and thus participates in the ATP-dependent degradation of ubiquitinated proteins. The 26S proteasome plays a key role in the maintenance of protein homeostasis by removing misfolded or damaged proteins that could impair cellular functions, and by removing proteins whose functions are no longer required. Associated with the PA200 or PA28, the 20S proteasome mediates ubiquitin-independent protein degradation. This type of proteolysis is required in several pathways including spermatogenesis (20S-PA200 complex) or generation of a subset of MHC class I-presented antigenic peptides (20S-PA28 complex). Within the 20S core complex, PSMB5 displays a chymotrypsin-like activity. In Bos taurus (Bovine), this protein is Proteasome subunit beta type-5.